Consider the following 425-residue polypeptide: Glutamyl-tRNA reductase (425 aa).

Substrate-binding positions include 49–52 (TCNR), serine 107, 112–114 (EPQ), and glutamine 118. Cysteine 50 serves as the catalytic Nucleophile. Residue 187–192 (GAGETI) coordinates NADP(+).

It belongs to the glutamyl-tRNA reductase family. In terms of assembly, homodimer.

The catalysed reaction is (S)-4-amino-5-oxopentanoate + tRNA(Glu) + NADP(+) = L-glutamyl-tRNA(Glu) + NADPH + H(+). It functions in the pathway porphyrin-containing compound metabolism; protoporphyrin-IX biosynthesis; 5-aminolevulinate from L-glutamyl-tRNA(Glu): step 1/2. Its function is as follows. Catalyzes the NADPH-dependent reduction of glutamyl-tRNA(Glu) to glutamate 1-semialdehyde (GSA). This is Glutamyl-tRNA reductase from Pseudomonas syringae pv. tomato (strain ATCC BAA-871 / DC3000).